The primary structure comprises 555 residues: Oxamate carbamoyltransferase subunit AllF (555 aa).

It belongs to the AllF family. The OXTCase is composed of 3 subunits, AllF, AllG and AllH. It depends on Mg(2+) as a cofactor.

The enzyme catalyses oxamate + carbamoyl phosphate = N-carbamoyl-2-oxoglycine + phosphate. The protein operates within nitrogen metabolism; (S)-allantoin degradation. Its function is as follows. Component of a carbamoyltransferase involved in the anaerobic nitrogen utilization via the assimilation of allantoin. Catalyzes the conversion of oxalurate (N-carbamoyl-2-oxoglycine) to oxamate and carbamoyl phosphate. In Escherichia coli (strain K12), this protein is Oxamate carbamoyltransferase subunit AllF.